Reading from the N-terminus, the 259-residue chain is Phosphate import ATP-binding protein PstB 2 (259 aa).

The 243-residue stretch at 12-254 (ISARGLNVHY…PKEPLTQGYI (243 aa)) folds into the ABC transporter domain. 44-51 (GPSGCGKS) contributes to the ATP binding site.

This sequence belongs to the ABC transporter superfamily. Phosphate importer (TC 3.A.1.7) family. As to quaternary structure, the complex is composed of two ATP-binding proteins (PstB), two transmembrane proteins (PstC and PstA) and a solute-binding protein (PstS).

It is found in the cell inner membrane. The enzyme catalyses phosphate(out) + ATP + H2O = ADP + 2 phosphate(in) + H(+). Functionally, part of the ABC transporter complex PstSACB involved in phosphate import. Responsible for energy coupling to the transport system. This Paramagnetospirillum magneticum (strain ATCC 700264 / AMB-1) (Magnetospirillum magneticum) protein is Phosphate import ATP-binding protein PstB 2.